Here is a 192-residue protein sequence, read N- to C-terminus: Fe/S biogenesis protein NfuA (192 aa).

The [4Fe-4S] cluster site is built by C149 and C152.

The protein belongs to the NfuA family. As to quaternary structure, homodimer. [4Fe-4S] cluster is required as a cofactor.

Functionally, involved in iron-sulfur cluster biogenesis. Binds a 4Fe-4S cluster, can transfer this cluster to apoproteins, and thereby intervenes in the maturation of Fe/S proteins. Could also act as a scaffold/chaperone for damaged Fe/S proteins. The protein is Fe/S biogenesis protein NfuA of Shewanella frigidimarina (strain NCIMB 400).